Here is a 151-residue protein sequence, read N- to C-terminus: Large ribosomal subunit protein uL13 (151 aa).

This sequence belongs to the universal ribosomal protein uL13 family. In terms of assembly, part of the 50S ribosomal subunit.

In terms of biological role, this protein is one of the early assembly proteins of the 50S ribosomal subunit, although it is not seen to bind rRNA by itself. It is important during the early stages of 50S assembly. The chain is Large ribosomal subunit protein uL13 from Nostoc sp. (strain PCC 7120 / SAG 25.82 / UTEX 2576).